Here is a 292-residue protein sequence, read N- to C-terminus: 4-hydroxy-tetrahydrodipicolinate synthase (292 aa).

Threonine 45 contacts pyruvate. The active-site Proton donor/acceptor is tyrosine 133. Lysine 161 (schiff-base intermediate with substrate) is an active-site residue. Isoleucine 203 contacts pyruvate.

This sequence belongs to the DapA family. As to quaternary structure, homotetramer; dimer of dimers.

The protein resides in the cytoplasm. It carries out the reaction L-aspartate 4-semialdehyde + pyruvate = (2S,4S)-4-hydroxy-2,3,4,5-tetrahydrodipicolinate + H2O + H(+). The protein operates within amino-acid biosynthesis; L-lysine biosynthesis via DAP pathway; (S)-tetrahydrodipicolinate from L-aspartate: step 3/4. Catalyzes the condensation of (S)-aspartate-beta-semialdehyde [(S)-ASA] and pyruvate to 4-hydroxy-tetrahydrodipicolinate (HTPA). This chain is 4-hydroxy-tetrahydrodipicolinate synthase, found in Salmonella paratyphi A (strain AKU_12601).